A 65-amino-acid polypeptide reads, in one-letter code: Small ribosomal subunit protein bS21 (65 aa).

Residues 39–65 form a disordered region; that stretch reads EKPSIKRKKKAIAARKRALKKQRKMMD. Positions 43–65 are enriched in basic residues; the sequence is IKRKKKAIAARKRALKKQRKMMD.

The protein belongs to the bacterial ribosomal protein bS21 family.

The protein is Small ribosomal subunit protein bS21 of Pelobacter propionicus (strain DSM 2379 / NBRC 103807 / OttBd1).